The sequence spans 899 residues: UPF0182 protein Mhun_1303 (899 aa).

The next 7 helical transmembrane spans lie at 6–26, 39–59, 93–113, 136–156, 196–216, 240–260, and 271–291; these read LLIFIPAAVILLFFLLTDLLS, VFLTILITSAALFVIGTLLFF, VAAGITGLSLSSSWEIILAFL, LPFYTILIQYLLALFVFTLII, FLPQVNCLLFLIFTTLAAFLW, ITIPALTILTVIAFLIGLLFL, and IAYGIGGFFIIAILSAGAGFL.

It belongs to the UPF0182 family.

The protein localises to the cell membrane. This chain is UPF0182 protein Mhun_1303, found in Methanospirillum hungatei JF-1 (strain ATCC 27890 / DSM 864 / NBRC 100397 / JF-1).